Consider the following 456-residue polypeptide: Imidazolonepropionase (456 aa).

Residues His104 and His106 each coordinate Fe(3+). Zn(2+) contacts are provided by His104 and His106. 4-imidazolone-5-propanoate is bound by residues Arg113, Tyr176, and His209. An N-formimidoyl-L-glutamate-binding site is contributed by Tyr176. Residue His274 coordinates Fe(3+). Residue His274 coordinates Zn(2+). Position 277 (Gln277) interacts with 4-imidazolone-5-propanoate. Residue Asp349 participates in Fe(3+) binding. Position 349 (Asp349) interacts with Zn(2+). Residues Asn351 and Gly353 each contribute to the N-formimidoyl-L-glutamate site. 4-imidazolone-5-propanoate is bound at residue Ser354.

It belongs to the metallo-dependent hydrolases superfamily. HutI family. Zn(2+) serves as cofactor. It depends on Fe(3+) as a cofactor.

It is found in the cytoplasm. The enzyme catalyses 4-imidazolone-5-propanoate + H2O = N-formimidoyl-L-glutamate. It participates in amino-acid degradation; L-histidine degradation into L-glutamate; N-formimidoyl-L-glutamate from L-histidine: step 3/3. Functionally, catalyzes the hydrolytic cleavage of the carbon-nitrogen bond in imidazolone-5-propanoate to yield N-formimidoyl-L-glutamate. It is the third step in the universal histidine degradation pathway. The chain is Imidazolonepropionase from Verminephrobacter eiseniae (strain EF01-2).